Consider the following 238-residue polypeptide: tRNA (guanine-N(7)-)-methyltransferase (238 aa).

Glu62, Glu87, Asp119, and Asp141 together coordinate S-adenosyl-L-methionine. The active site involves Asp141. Substrate contacts are provided by residues Lys145, Asp177, and 216 to 219; that span reads TRYE.

Belongs to the class I-like SAM-binding methyltransferase superfamily. TrmB family.

The enzyme catalyses guanosine(46) in tRNA + S-adenosyl-L-methionine = N(7)-methylguanosine(46) in tRNA + S-adenosyl-L-homocysteine. The protein operates within tRNA modification; N(7)-methylguanine-tRNA biosynthesis. Its function is as follows. Catalyzes the formation of N(7)-methylguanine at position 46 (m7G46) in tRNA. This chain is tRNA (guanine-N(7)-)-methyltransferase, found in Novosphingobium aromaticivorans (strain ATCC 700278 / DSM 12444 / CCUG 56034 / CIP 105152 / NBRC 16084 / F199).